The primary structure comprises 175 residues: Interleukin-10 (175 aa).

Positions 1–18 (MPSSALLYCLIFLAGVAA) are cleaved as a signal peptide. 2 disulfides stabilise this stretch: C26–C122 and C76–C128. A glycan (N-linked (GlcNAc...) asparagine) is linked at N130.

It belongs to the IL-10 family. In terms of assembly, homodimer. Interacts with IL10RA and IL10RB.

The protein localises to the secreted. Major immune regulatory cytokine that acts on many cells of the immune system where it has profound anti-inflammatory functions, limiting excessive tissue disruption caused by inflammation. Mechanistically, IL10 binds to its heterotetrameric receptor comprising IL10RA and IL10RB leading to JAK1 and STAT2-mediated phosphorylation of STAT3. In turn, STAT3 translocates to the nucleus where it drives expression of anti-inflammatory mediators. Targets antigen-presenting cells (APCs) such as macrophages and monocytes and inhibits their release of pro-inflammatory cytokines including granulocyte-macrophage colony-stimulating factor /GM-CSF, granulocyte colony-stimulating factor/G-CSF, IL-1 alpha, IL-1 beta, IL-6, IL-8 and TNF-alpha. Also interferes with antigen presentation by reducing the expression of MHC-class II and co-stimulatory molecules, thereby inhibiting their ability to induce T cell activation. In addition, controls the inflammatory response of macrophages by reprogramming essential metabolic pathways including mTOR signaling. The polypeptide is Interleukin-10 (IL10) (Sus scrofa (Pig)).